We begin with the raw amino-acid sequence, 122 residues long: Large ribosomal subunit protein uL14 (122 aa).

Belongs to the universal ribosomal protein uL14 family. Part of the 50S ribosomal subunit. Forms a cluster with proteins L3 and L19. In the 70S ribosome, L14 and L19 interact and together make contacts with the 16S rRNA in bridges B5 and B8.

Binds to 23S rRNA. Forms part of two intersubunit bridges in the 70S ribosome. The chain is Large ribosomal subunit protein uL14 from Polynucleobacter necessarius subsp. necessarius (strain STIR1).